The following is a 153-amino-acid chain: uncharacterized protein (153 aa).

Disordered regions lie at residues 24–87 and 101–153; these read PEDS…DRPL and GDPR…RIPS. Low complexity predominate over residues 27-37; the sequence is SSCPCPRLPLS. Basic and acidic residues predominate over residues 143–153; the sequence is TRKESSCRIPS.

This is an uncharacterized protein from Dryophytes versicolor (chameleon treefrog).